A 100-amino-acid polypeptide reads, in one-letter code: Aspartyl/glutamyl-tRNA(Asn/Gln) amidotransferase subunit C (100 aa).

Belongs to the GatC family. As to quaternary structure, heterotrimer of A, B and C subunits.

It carries out the reaction L-glutamyl-tRNA(Gln) + L-glutamine + ATP + H2O = L-glutaminyl-tRNA(Gln) + L-glutamate + ADP + phosphate + H(+). It catalyses the reaction L-aspartyl-tRNA(Asn) + L-glutamine + ATP + H2O = L-asparaginyl-tRNA(Asn) + L-glutamate + ADP + phosphate + 2 H(+). Allows the formation of correctly charged Asn-tRNA(Asn) or Gln-tRNA(Gln) through the transamidation of misacylated Asp-tRNA(Asn) or Glu-tRNA(Gln) in organisms which lack either or both of asparaginyl-tRNA or glutaminyl-tRNA synthetases. The reaction takes place in the presence of glutamine and ATP through an activated phospho-Asp-tRNA(Asn) or phospho-Glu-tRNA(Gln). The sequence is that of Aspartyl/glutamyl-tRNA(Asn/Gln) amidotransferase subunit C from Staphylococcus aureus (strain Newman).